Here is a 238-residue protein sequence, read N- to C-terminus: Ribonuclease PH (238 aa).

Residues Arg-86 and 124 to 126 (GTR) each bind phosphate.

It belongs to the RNase PH family. In terms of assembly, homohexameric ring arranged as a trimer of dimers.

It catalyses the reaction tRNA(n+1) + phosphate = tRNA(n) + a ribonucleoside 5'-diphosphate. Its function is as follows. Phosphorolytic 3'-5' exoribonuclease that plays an important role in tRNA 3'-end maturation. Removes nucleotide residues following the 3'-CCA terminus of tRNAs; can also add nucleotides to the ends of RNA molecules by using nucleoside diphosphates as substrates, but this may not be physiologically important. Probably plays a role in initiation of 16S rRNA degradation (leading to ribosome degradation) during starvation. This Haemophilus influenzae (strain 86-028NP) protein is Ribonuclease PH.